Reading from the N-terminus, the 444-residue chain is MAKKYFGTDGVRGEVGQFPITPDFVLKLGYAAGQVLVQHDTDQKPTVLIGKDTRISGYMLEAALVAGFTAAGVNVVQTGPLPTPGVAYLTRALRLSAGVMISASHNAYSDNGIKFFAEGGVKLSDEVELEIEAKIDGEMKTLPSARLGRARRISGADDRYIEFCKSTFPSHSDLRGLKLVIDTANGAGYGVAPKVFHELGAQVVSIGDEPNGYNINEKCGATYTKTLQAAVLQHEADYGIALDGDGDRLMMVDKNGKVYDGDSLIYVIAKARAREGINIGGVVGTVMTNMAMEIALKEQGVDFCRAKVGDRYVLAQLNQRSWLIGGEASGHILCMDKHNTGDGIISALQVLAALQTLNQDLATVCADWQPYPQTMINVRIQKGQKWQEASKDVLAEVEKELEGKGRVVLRASGTEPVVRVMVEARQADWARDGAERIASAIGSL.

S104 (phosphoserine intermediate) is an active-site residue. Residues S104, D243, D245, and D247 each contribute to the Mg(2+) site. Phosphoserine is present on S104.

It belongs to the phosphohexose mutase family. The cofactor is Mg(2+). Post-translationally, activated by phosphorylation.

It carries out the reaction alpha-D-glucosamine 1-phosphate = D-glucosamine 6-phosphate. Its function is as follows. Catalyzes the conversion of glucosamine-6-phosphate to glucosamine-1-phosphate. The sequence is that of Phosphoglucosamine mutase from Neisseria meningitidis serogroup C / serotype 2a (strain ATCC 700532 / DSM 15464 / FAM18).